The sequence spans 399 residues: 1-deoxy-D-xylulose 5-phosphate reductoisomerase (399 aa).

The NADPH site is built by Thr-11, Gly-12, Ser-13, Ile-14, Gly-37, Asn-39, and Asn-125. Lys-126 lines the 1-deoxy-D-xylulose 5-phosphate pocket. Residue Glu-127 coordinates NADPH. Asp-151 lines the Mn(2+) pocket. Positions 152, 153, 177, and 200 each coordinate 1-deoxy-D-xylulose 5-phosphate. Glu-153 lines the Mn(2+) pocket. Gly-206 is a binding site for NADPH. Positions 213, 218, 219, and 222 each coordinate 1-deoxy-D-xylulose 5-phosphate. Glu-222 is a binding site for Mn(2+).

This sequence belongs to the DXR family. Mg(2+) is required as a cofactor. It depends on Mn(2+) as a cofactor.

It carries out the reaction 2-C-methyl-D-erythritol 4-phosphate + NADP(+) = 1-deoxy-D-xylulose 5-phosphate + NADPH + H(+). It participates in isoprenoid biosynthesis; isopentenyl diphosphate biosynthesis via DXP pathway; isopentenyl diphosphate from 1-deoxy-D-xylulose 5-phosphate: step 1/6. Its function is as follows. Catalyzes the NADPH-dependent rearrangement and reduction of 1-deoxy-D-xylulose-5-phosphate (DXP) to 2-C-methyl-D-erythritol 4-phosphate (MEP). This chain is 1-deoxy-D-xylulose 5-phosphate reductoisomerase, found in Nostoc sp. (strain PCC 7120 / SAG 25.82 / UTEX 2576).